The primary structure comprises 400 residues: uncharacterized protein (400 aa).

Over residues 112–126 (SESTAQIEKKPRKPL) the composition is skewed to basic and acidic residues. The disordered stretch occupies residues 112–151 (SESTAQIEKKPRKPLDSVGLLEGDRNKRKKSPQMNDFNIK).

This is an uncharacterized protein from Homo sapiens (Human).